Consider the following 285-residue polypeptide: D-apionate oxidoisomerase (285 aa).

Residues 15-17 (GKM), glutamate 36, and aspartate 71 contribute to the NAD(+) site. Residues histidine 116 and glutamate 186 each coordinate Zn(2+).

Belongs to the ApnO family. Zn(2+) is required as a cofactor.

It carries out the reaction D-apionate + NAD(+) = 3-oxoisoapionate + NADH + H(+). The protein operates within carbohydrate metabolism. Its function is as follows. Involved in catabolism of D-apiose. Catalyzes the conversion of D-apionate to 3-oxo-isoapionate. The protein is D-apionate oxidoisomerase of Pectobacterium atrosepticum (strain SCRI 1043 / ATCC BAA-672) (Erwinia carotovora subsp. atroseptica).